A 303-amino-acid chain; its full sequence is Oxygen-dependent coproporphyrinogen-III oxidase (303 aa).

Ser-93 lines the substrate pocket. Positions 97 and 107 each coordinate a divalent metal cation. The active-site Proton donor is the His-107. Position 109 to 111 (109 to 111 (NVR)) interacts with substrate. A divalent metal cation is bound by residues His-146 and His-176. Positions 241-276 (YVEFNLVYDRGTLFGLQSGGRTESILMSLPPQVRWG) are important for dimerization. 259-261 (GGR) contributes to the substrate binding site.

Belongs to the aerobic coproporphyrinogen-III oxidase family. In terms of assembly, homodimer. It depends on a divalent metal cation as a cofactor.

It localises to the cytoplasm. The enzyme catalyses coproporphyrinogen III + O2 + 2 H(+) = protoporphyrinogen IX + 2 CO2 + 2 H2O. The protein operates within porphyrin-containing compound metabolism; protoporphyrin-IX biosynthesis; protoporphyrinogen-IX from coproporphyrinogen-III (O2 route): step 1/1. Involved in the heme biosynthesis. Catalyzes the aerobic oxidative decarboxylation of propionate groups of rings A and B of coproporphyrinogen-III to yield the vinyl groups in protoporphyrinogen-IX. This chain is Oxygen-dependent coproporphyrinogen-III oxidase, found in Pseudomonas putida (strain GB-1).